Consider the following 234-residue polypeptide: MQFTTPLQSAILIKRYKRFLADVRRPDGQIITLHCANTGAMTGCATPGDTVWYSSSDNPKRKYPSSWELTHTQAGDWICINTLRANTLVYEAIAQQRIGEVSGYTKIRSEVRYGAENSRIDLLLQAEDRPDCYIEVKSVTLLQSACGYFPDAVTERGQKHLRELQHQVQSGVRAVLFFAVLHSGITHVRAARHIDPRYAQLLAQASDLGVEVLCYGAQINPAGIRLTQPLPVTV.

The protein belongs to the SfsA family.

This chain is Sugar fermentation stimulation protein homolog, found in Edwardsiella ictaluri (strain 93-146).